A 362-amino-acid polypeptide reads, in one-letter code: Probable dual-specificity RNA methyltransferase RlmN (362 aa).

Glu-105 acts as the Proton acceptor in catalysis. A Radical SAM core domain is found at 111–344 (HEYGNSICVT…VTIRREQGHD (234 aa)). Cys-118 and Cys-349 form a disulfide bridge. 3 residues coordinate [4Fe-4S] cluster: Cys-125, Cys-129, and Cys-132. Residues 175–176 (GE), Ser-207, 230–232 (SLH), and Asn-306 contribute to the S-adenosyl-L-methionine site. Catalysis depends on Cys-349, which acts as the S-methylcysteine intermediate.

Belongs to the radical SAM superfamily. RlmN family. [4Fe-4S] cluster is required as a cofactor.

It is found in the cytoplasm. It catalyses the reaction adenosine(2503) in 23S rRNA + 2 reduced [2Fe-2S]-[ferredoxin] + 2 S-adenosyl-L-methionine = 2-methyladenosine(2503) in 23S rRNA + 5'-deoxyadenosine + L-methionine + 2 oxidized [2Fe-2S]-[ferredoxin] + S-adenosyl-L-homocysteine. The enzyme catalyses adenosine(37) in tRNA + 2 reduced [2Fe-2S]-[ferredoxin] + 2 S-adenosyl-L-methionine = 2-methyladenosine(37) in tRNA + 5'-deoxyadenosine + L-methionine + 2 oxidized [2Fe-2S]-[ferredoxin] + S-adenosyl-L-homocysteine. Specifically methylates position 2 of adenine 2503 in 23S rRNA and position 2 of adenine 37 in tRNAs. The sequence is that of Probable dual-specificity RNA methyltransferase RlmN from Bacillus thuringiensis subsp. konkukian (strain 97-27).